Consider the following 111-residue polypeptide: Small ubiquitin-related modifier 3 (111 aa).

Residues 16 to 93 (AHVILKVKSQ…IDACRAMSGG (78 aa)) form the Ubiquitin-like domain. Gly93 participates in a covalent cross-link: Glycyl lysine isopeptide (Gly-Lys) (interchain with K-? in acceptor proteins).

It belongs to the ubiquitin family. SUMO subfamily. Interacts with SAE2, SCE1, SIZ1 and MMS21. Covalently attached to a number of proteins. Interacts with NPR1; this interaction promotes NPR1 phosphorylation and triggers its sumoylation and subsequent degradation.

The protein localises to the nucleus. Its subcellular location is the cytoplasm. In terms of biological role, ubiquitin-like protein which can be covalently attached to target lysines as a monomer. Does not seem to be involved in protein degradation and may function as an antagonist of ubiquitin in the degradation process. Promotes NPR1 sumoylation to activate defense gene expression and regulate its degradation. In Arabidopsis thaliana (Mouse-ear cress), this protein is Small ubiquitin-related modifier 3.